The following is a 429-amino-acid chain: Enolase (429 aa).

Position 163 (Gln-163) interacts with (2R)-2-phosphoglycerate. Glu-205 (proton donor) is an active-site residue. Mg(2+) contacts are provided by Asp-242, Glu-286, and Asp-313. 4 residues coordinate (2R)-2-phosphoglycerate: Lys-338, Arg-367, Ser-368, and Lys-389. Lys-338 acts as the Proton acceptor in catalysis.

Belongs to the enolase family. Mg(2+) is required as a cofactor.

It localises to the cytoplasm. Its subcellular location is the secreted. It is found in the cell surface. The enzyme catalyses (2R)-2-phosphoglycerate = phosphoenolpyruvate + H2O. Its pathway is carbohydrate degradation; glycolysis; pyruvate from D-glyceraldehyde 3-phosphate: step 4/5. In terms of biological role, catalyzes the reversible conversion of 2-phosphoglycerate (2-PG) into phosphoenolpyruvate (PEP). It is essential for the degradation of carbohydrates via glycolysis. The chain is Enolase from Geobacter metallireducens (strain ATCC 53774 / DSM 7210 / GS-15).